The primary structure comprises 372 residues: Cytochrome b (372 aa).

Helical transmembrane passes span 25–45, 69–90, 105–125, and 170–190; these read FGSM…FLAI, WMMQ…YIHI, WLSG…GYVL, and FFAL…IHIM. Residues H75 and H89 each coordinate heme b. Residues H174 and H188 each contribute to the heme b site. H193 is a binding site for a ubiquinone. The next 4 helical transmembrane spans lie at 218-238, 280-300, 312-332, and 339-358; these read HKDM…MSFT, LGGT…PFTH, LMQF…WAAT, and FTSI…TMNP.

Belongs to the cytochrome b family. As to quaternary structure, the cytochrome bc1 complex contains 3 respiratory subunits (MT-CYB, CYC1 and UQCRFS1), 2 core proteins (UQCRC1 and UQCRC2) and probably 6 low-molecular weight proteins. Requires heme b as cofactor.

The protein resides in the mitochondrion inner membrane. In terms of biological role, component of the ubiquinol-cytochrome c reductase complex (complex III or cytochrome b-c1 complex) that is part of the mitochondrial respiratory chain. The b-c1 complex mediates electron transfer from ubiquinol to cytochrome c. Contributes to the generation of a proton gradient across the mitochondrial membrane that is then used for ATP synthesis. In Pantherophis vulpinus (Western fox snake), this protein is Cytochrome b (MT-CYB).